The following is a 595-amino-acid chain: Merlin (595 aa).

At serine 13 the chain carries Phosphoserine. Residues 22–311 form the FERM domain; it reads FTVRIVTMDA…GNHDLFMRRR (290 aa). Residue serine 518 is modified to Phosphoserine; by PAK.

In terms of assembly, interacts with NHERF1, HGS and AGAP2. Interacts with LAYN. Interacts with SGSM3. Interacts (via FERM domain) with MPP1. Interacts with WWC1. Interacts with the CUL4A-RBX1-DDB1-VprBP/DCAF1 E3 ubiquitin-protein ligase complex. The unphosphorylated form interacts (via FERM domain) with VPRBP/DCAF1. Interacts (via FERM domain) with NOP53; the interaction is direct. Interacts with SCHIP1; the interaction is direct. In terms of processing, phosphorylation of Ser-518 inhibits nuclear localization by disrupting the intramolecular association of the FERM domain with the C-terminal tail. The dephosphorylation of Ser-518 favors the interaction with NOP53. Post-translationally, ubiquitinated by the CUL4A-RBX1-DDB1-DCAF1/VprBP E3 ubiquitin-protein ligase complex for ubiquitination and subsequent proteasome-dependent degradation. Widely expressed. Isoform 1 and isoform 3 are predominant. Isoform 4, isoform 5 and isoform 6 are expressed moderately. Isoform 8 is found at low frequency. Isoform 7, isoform 9 and isoform 10 are not expressed in adult tissues, with the exception of adult retina expressing isoform 10. Isoform 9 is faintly expressed in fetal brain, heart, lung, skeletal muscle and spleen. Fetal thymus expresses isoforms 1, 7, 9 and 10 at similar levels.

Its subcellular location is the cell projection. The protein localises to the filopodium membrane. It is found in the ruffle membrane. The protein resides in the nucleus. It localises to the cytoplasm. Its subcellular location is the perinuclear region. The protein localises to the cytoplasmic granule. It is found in the cytoskeleton. Functionally, probable regulator of the Hippo/SWH (Sav/Wts/Hpo) signaling pathway, a signaling pathway that plays a pivotal role in tumor suppression by restricting proliferation and promoting apoptosis. Along with WWC1 can synergistically induce the phosphorylation of LATS1 and LATS2 and can probably function in the regulation of the Hippo/SWH (Sav/Wts/Hpo) signaling pathway. May act as a membrane stabilizing protein. May inhibit PI3 kinase by binding to AGAP2 and impairing its stimulating activity. Suppresses cell proliferation and tumorigenesis by inhibiting the CUL4A-RBX1-DDB1-VprBP/DCAF1 E3 ubiquitin-protein ligase complex. This Homo sapiens (Human) protein is Merlin (NF2).